The following is a 125-amino-acid chain: MAKLTNEDILNAIADMSVMNVVELVSAMEEKFGVSAAPVAAPPVVADTIDDVVVEKDEFDVMLTSFGKKKVAVIKMARSITGLGLKEAKDMVESAPVVIKEGASKVEAEDIQKQLEEAGASVELK.

The protein belongs to the bacterial ribosomal protein bL12 family. Homodimer. Part of the ribosomal stalk of the 50S ribosomal subunit. Forms a multimeric L10(L12)X complex, where L10 forms an elongated spine to which 2 to 4 L12 dimers bind in a sequential fashion. Binds GTP-bound translation factors.

Its function is as follows. Forms part of the ribosomal stalk which helps the ribosome interact with GTP-bound translation factors. Is thus essential for accurate translation. The protein is Large ribosomal subunit protein bL12 of Ruthia magnifica subsp. Calyptogena magnifica.